Here is a 241-residue protein sequence, read N- to C-terminus: Small ribosomal subunit protein uS2 (241 aa).

It belongs to the universal ribosomal protein uS2 family.

The chain is Small ribosomal subunit protein uS2 from Klebsiella pneumoniae (strain 342).